The following is a 185-amino-acid chain: Elongation factor P (185 aa).

It belongs to the elongation factor P family.

The protein localises to the cytoplasm. It participates in protein biosynthesis; polypeptide chain elongation. Its function is as follows. Involved in peptide bond synthesis. Stimulates efficient translation and peptide-bond synthesis on native or reconstituted 70S ribosomes in vitro. Probably functions indirectly by altering the affinity of the ribosome for aminoacyl-tRNA, thus increasing their reactivity as acceptors for peptidyl transferase. The chain is Elongation factor P from Paraburkholderia xenovorans (strain LB400).